The chain runs to 638 residues: MMSDEDNTYSDDEEWLDLDLGLPNNDIKTAPILNSSLLSSAVHGERLIQERPTHDFGDVEATVDRTVEKRSRLKITSVDRKIRLQIHQLHLLCLTYHLCTRNTWCDDNRLNYLVKYIPPGIRVSLHPSSQKSQMIRNKTFLHGLAGLVEVWKRKYKITTNGLRKPNYGLLQNNSLISESLSLEEFCKNSKLLSGSRDYGTQLFASILRNLNVPTRLVFSLQVLSFRFKGAINEASSHEIVPAWSQQMENDSSSDISESAHITSRFRKRRKIIQPSFSNLSHLDASDIVTEDTKLKVIDSPKPVFWVEAFNKAMQKWVCVDPFGDASVIGKYRRFEPASSDHLNQMTYVFAIEANGYVKDVTRKYCLHYYKILKNRVEIFPFGKAWMNRIFSKIGKPRDFYNDMDAIEDAELLRLEQSEGIPRNIQDLKDHPLFVLERHLKKNQAIKTGKSCGRINTKNGVELVYPRKYVSNGFSAEHWYRKGRIIKPGAQPLKHVKNGDKVLPLYDEEATQLYTPKPVVANIVPKNAYGNIDLYVPSMLPYGAYHCRKRCALAAAKFLEIDYAKAVVGFDFQRKYSKPKLEGVVVSKRYEEAIDLIAEEIDQEEKEAEARNVRKTCLLLWKRLITGLRIRQRVFEEYG.

It belongs to the XPC family.

The protein localises to the nucleus. Its function is as follows. Has a role in the nucleotide excision repair (NER) pathway. Acts in both transcription-coupled repair (TCR) which removes damage from the transcribed strand of active genes and in global genome repair (GGR) which removes damage in untranscribed DNA. Involved in the repair of UV-induced damages where it is involved in the removal of cyclobutane pyrimidine dimers (CPDs). This chain is DNA repair protein rhp41 (rhp41), found in Schizosaccharomyces pombe (strain 972 / ATCC 24843) (Fission yeast).